The following is an 80-amino-acid chain: Adipogenin (80 aa).

The helical transmembrane segment at 16–36 (FLVFWLCLPVALLLFLTIVWL) threads the bilayer. Serine 63 carries the post-translational modification Phosphoserine.

Belongs to the adipogenin family. In terms of tissue distribution, selectively expressed in adipose tissue where it is particularly enriched in brown adipose tissue. In adipose tissue, expressed exclusively in adipocytes and not in the stromal-vascular cell population. Expressed at much lower levels in heart, stomach and muscle and barely detected in kidney and lung.

Its subcellular location is the membrane. It is found in the nucleus. Functionally, plays a role in stimulating adipocyte differentiation and development. The polypeptide is Adipogenin (Adig) (Mus musculus (Mouse)).